The sequence spans 265 residues: Ubiquinone biosynthesis protein COQ4 homolog, mitochondrial (265 aa).

The transit peptide at 1 to 30 (MMQRSWQSWRRGLTLGLASRRSYVASVEAP) directs the protein to the mitochondrion. Histidine 170, aspartate 171, histidine 174, and glutamate 186 together coordinate Zn(2+).

It belongs to the COQ4 family. As to quaternary structure, component of a multi-subunit COQ enzyme complex. It depends on Zn(2+) as a cofactor.

It localises to the mitochondrion inner membrane. The enzyme catalyses a 4-hydroxy-3-methoxy-5-(all-trans-polyprenyl)benzoate + H(+) = a 2-methoxy-6-(all-trans-polyprenyl)phenol + CO2. It functions in the pathway cofactor biosynthesis; ubiquinone biosynthesis. Functionally, lyase that catalyzes the C1-decarboxylation of 4-hydroxy-3-methoxy-5-(all-trans-polyprenyl)benzoic acid into 2-methoxy-6-(all-trans-polyprenyl)phenol during ubiquinone biosynthesis. In Drosophila virilis (Fruit fly), this protein is Ubiquinone biosynthesis protein COQ4 homolog, mitochondrial.